An 88-amino-acid chain; its full sequence is MPYLIVTYDIAEERVNKVRKILKKYFMWVQNSVFEGEITEGKLLKCKLELEKVIDKEVDSVYFYSLENRLNYRKTVLGIEKEITGNIL.

Asp9 contributes to the Mg(2+) binding site.

This sequence belongs to the CRISPR-associated endoribonuclease Cas2 protein family. As to quaternary structure, homodimer, forms a heterotetramer with a Cas1 homodimer. Requires Mg(2+) as cofactor.

Functionally, CRISPR (clustered regularly interspaced short palindromic repeat), is an adaptive immune system that provides protection against mobile genetic elements (viruses, transposable elements and conjugative plasmids). CRISPR clusters contain sequences complementary to antecedent mobile elements and target invading nucleic acids. CRISPR clusters are transcribed and processed into CRISPR RNA (crRNA). Functions as a ssRNA-specific endoribonuclease. Involved in the integration of spacer DNA into the CRISPR cassette. This chain is CRISPR-associated endoribonuclease Cas2 3, found in Thermodesulfovibrio yellowstonii (strain ATCC 51303 / DSM 11347 / YP87).